The sequence spans 928 residues: DNA-binding protein RFX6 (928 aa).

2 disordered regions span residues 1 to 22 (MAKV…QVSP) and 53 to 102 (PGGA…AADL). The span at 92-101 (SHDSKTKAAD) shows a compositional bias: basic and acidic residues. The RFX-type winged-helix DNA-binding region spans 124–199 (TLQWLEENYI…YHYYGIGIKE (76 aa)).

Belongs to the RFX family. Interacts with RFX3.

It is found in the nucleus. Functionally, transcription factor required to direct islet cell differentiation during endocrine pancreas development. Specifically required for the differentiation of 4 of the 5 islet cell types and for the production of insulin. Not required for pancreatic PP (polypeptide-producing) cells differentiation. Acts downstream of NEUROG3 and regulates the transcription factors involved in beta-cell maturation and function, thereby restricting the expression of the beta-cell differentiation and specification genes, and thus the beta-cell fate choice. Activates transcription by forming a heterodimer with RFX3 and binding to the X-box in the promoter of target genes. Involved in glucose-stimulated insulin secretion by promoting insulin and L-type calcium channel gene transcription. The chain is DNA-binding protein RFX6 (RFX6) from Ailuropoda melanoleuca (Giant panda).